A 201-amino-acid polypeptide reads, in one-letter code: Translation initiation factor IF-3 (201 aa).

Residues 170–201 (TPKSASKKGHTPPKTQVEASKQANESAETEEE) are disordered. Over residues 182–195 (PKTQVEASKQANES) the composition is skewed to polar residues.

Belongs to the IF-3 family. As to quaternary structure, monomer.

The protein resides in the cytoplasm. In terms of biological role, IF-3 binds to the 30S ribosomal subunit and shifts the equilibrium between 70S ribosomes and their 50S and 30S subunits in favor of the free subunits, thus enhancing the availability of 30S subunits on which protein synthesis initiation begins. This chain is Translation initiation factor IF-3, found in Porphyromonas gingivalis (strain ATCC BAA-308 / W83).